Here is a 251-residue protein sequence, read N- to C-terminus: MVDQEKETTHFGFRTVAKEQKEGMVAEVFHSVAAKYDLMNDLMSFGVHRIWKRFTVDCSGVRRGQRVLDLAGGTGDLTAKFSRLVGEQGEVILADINESMLRMGREKLRDKGIVGNVSYVQANAEALPFPDNFFDCITISFGLRNVTEKEKALRSMFRVLKPGGRLLVLEFSKPLLEPLSKAYDAYSFHILPKIGELVAQDAESYRYLAESIRMHPDQETLKGMMADAGFENVTYSNLTGGIVALHRGFKF.

S-adenosyl-L-methionine-binding positions include Thr74, Asp95, 123–124 (NA), and Ser140.

This sequence belongs to the class I-like SAM-binding methyltransferase superfamily. MenG/UbiE family.

It carries out the reaction a 2-demethylmenaquinol + S-adenosyl-L-methionine = a menaquinol + S-adenosyl-L-homocysteine + H(+). It catalyses the reaction a 2-methoxy-6-(all-trans-polyprenyl)benzene-1,4-diol + S-adenosyl-L-methionine = a 5-methoxy-2-methyl-3-(all-trans-polyprenyl)benzene-1,4-diol + S-adenosyl-L-homocysteine + H(+). The protein operates within quinol/quinone metabolism; menaquinone biosynthesis; menaquinol from 1,4-dihydroxy-2-naphthoate: step 2/2. It participates in cofactor biosynthesis; ubiquinone biosynthesis. Methyltransferase required for the conversion of demethylmenaquinol (DMKH2) to menaquinol (MKH2) and the conversion of 2-polyprenyl-6-methoxy-1,4-benzoquinol (DDMQH2) to 2-polyprenyl-3-methyl-6-methoxy-1,4-benzoquinol (DMQH2). The protein is Ubiquinone/menaquinone biosynthesis C-methyltransferase UbiE of Yersinia pestis bv. Antiqua (strain Antiqua).